We begin with the raw amino-acid sequence, 69 residues long: Putative membrane protein insertion efficiency factor (69 aa).

It belongs to the UPF0161 family.

The protein resides in the cell membrane. Its function is as follows. Could be involved in insertion of integral membrane proteins into the membrane. This is Putative membrane protein insertion efficiency factor from Desulfitobacterium hafniense (strain Y51).